Here is a 260-residue protein sequence, read N- to C-terminus: Phosphate import ATP-binding protein PstB (260 aa).

The ABC transporter domain maps to 14–255; the sequence is IETENLSLFY…PKNTKTEEYI (242 aa). ATP is bound at residue 46–53; it reads GPSGCGKS.

Belongs to the ABC transporter superfamily. Phosphate importer (TC 3.A.1.7) family. In terms of assembly, the complex is composed of two ATP-binding proteins (PstB), two transmembrane proteins (PstC and PstA) and a solute-binding protein (PstS).

The protein localises to the cell inner membrane. The enzyme catalyses phosphate(out) + ATP + H2O = ADP + 2 phosphate(in) + H(+). Part of the ABC transporter complex PstSACB involved in phosphate import. Responsible for energy coupling to the transport system. The polypeptide is Phosphate import ATP-binding protein PstB (Borrelia garinii subsp. bavariensis (strain ATCC BAA-2496 / DSM 23469 / PBi) (Borreliella bavariensis)).